The primary structure comprises 544 residues: Chaperonin GroEL 1 (544 aa).

Residues 30 to 33 (TLGP), K51, 87 to 91 (DGTTT), G415, and D494 contribute to the ATP site.

The protein belongs to the chaperonin (HSP60) family. In terms of assembly, forms a cylinder of 14 subunits composed of two heptameric rings stacked back-to-back. Interacts with the co-chaperonin GroES.

Its subcellular location is the cytoplasm. It carries out the reaction ATP + H2O + a folded polypeptide = ADP + phosphate + an unfolded polypeptide.. Functionally, together with its co-chaperonin GroES, plays an essential role in assisting protein folding. The GroEL-GroES system forms a nano-cage that allows encapsulation of the non-native substrate proteins and provides a physical environment optimized to promote and accelerate protein folding. This chain is Chaperonin GroEL 1, found in Syntrophus aciditrophicus (strain SB).